The sequence spans 642 residues: Threonine--tRNA ligase (642 aa).

One can recognise a TGS domain in the interval 1–61 (MPVITLPDGS…HEDASLSIIT (61 aa)). The segment at 243 to 534 (DHRKIGKQLD…LIEEYAGRFP (292 aa)) is catalytic. Zn(2+) contacts are provided by cysteine 334, histidine 385, and histidine 511.

Belongs to the class-II aminoacyl-tRNA synthetase family. As to quaternary structure, homodimer. It depends on Zn(2+) as a cofactor.

The protein localises to the cytoplasm. The catalysed reaction is tRNA(Thr) + L-threonine + ATP = L-threonyl-tRNA(Thr) + AMP + diphosphate + H(+). Functionally, catalyzes the attachment of threonine to tRNA(Thr) in a two-step reaction: L-threonine is first activated by ATP to form Thr-AMP and then transferred to the acceptor end of tRNA(Thr). Also edits incorrectly charged L-seryl-tRNA(Thr). The sequence is that of Threonine--tRNA ligase from Shewanella amazonensis (strain ATCC BAA-1098 / SB2B).